The chain runs to 61 residues: Beta-insect depressant toxin BaIT2 (61 aa).

Positions 1-61 (DGYIRRRDGC…TWKSETNTCG (61 aa)) constitute an LCN-type CS-alpha/beta domain. 4 cysteine pairs are disulfide-bonded: C10-C60, C14-C35, C21-C42, and C25-C44.

It belongs to the long (4 C-C) scorpion toxin superfamily. Sodium channel inhibitor family. Beta subfamily. Expressed by the venom gland.

It is found in the secreted. In terms of biological role, depressant insect beta-toxins cause a transient contraction paralysis followed by a slow flaccid paralysis. They bind voltage-independently at site-4 of sodium channels (Nav) and shift the voltage of activation toward more negative potentials thereby affecting sodium channel activation and promoting spontaneous and repetitive firing. This toxin is active only on insects. The chain is Beta-insect depressant toxin BaIT2 from Buthacus arenicola (North African scorpion).